The sequence spans 205 residues: Holliday junction branch migration complex subunit RuvA (205 aa).

Positions 1 to 64 (MIGRLRGTLA…EDAHLLYGFA (64 aa)) are domain I. The domain II stretch occupies residues 65-143 (EKRERELFRE…AWETSPAMFT (79 aa)). The tract at residues 144 to 154 (LVSDGPLPVAS) is flexible linker. The domain III stretch occupies residues 154–205 (SESSAEADAVSALVSLGYKPQEASKAIAAIKDKAGLSSEELIRRSLKGMIAK).

The protein belongs to the RuvA family. In terms of assembly, homotetramer. Forms an RuvA(8)-RuvB(12)-Holliday junction (HJ) complex. HJ DNA is sandwiched between 2 RuvA tetramers; dsDNA enters through RuvA and exits via RuvB. An RuvB hexamer assembles on each DNA strand where it exits the tetramer. Each RuvB hexamer is contacted by two RuvA subunits (via domain III) on 2 adjacent RuvB subunits; this complex drives branch migration. In the full resolvosome a probable DNA-RuvA(4)-RuvB(12)-RuvC(2) complex forms which resolves the HJ.

It is found in the cytoplasm. Its function is as follows. The RuvA-RuvB-RuvC complex processes Holliday junction (HJ) DNA during genetic recombination and DNA repair, while the RuvA-RuvB complex plays an important role in the rescue of blocked DNA replication forks via replication fork reversal (RFR). RuvA specifically binds to HJ cruciform DNA, conferring on it an open structure. The RuvB hexamer acts as an ATP-dependent pump, pulling dsDNA into and through the RuvAB complex. HJ branch migration allows RuvC to scan DNA until it finds its consensus sequence, where it cleaves and resolves the cruciform DNA. This is Holliday junction branch migration complex subunit RuvA from Pseudomonas entomophila (strain L48).